Reading from the N-terminus, the 210-residue chain is Pyridoxine/pyridoxamine 5'-phosphate oxidase (210 aa).

Substrate contacts are provided by residues 7-10 (RQSY) and lysine 65. FMN contacts are provided by residues 60–65 (RIVLIK), 75–76 (FT), arginine 81, lysine 82, and glutamine 104. Substrate-binding residues include tyrosine 122, arginine 126, and serine 130. Residues 139–140 (QS) and tryptophan 182 each bind FMN. 188–190 (RLH) lines the substrate pocket. Arginine 192 lines the FMN pocket.

This sequence belongs to the pyridoxamine 5'-phosphate oxidase family. Homodimer. FMN serves as cofactor.

The enzyme catalyses pyridoxamine 5'-phosphate + O2 + H2O = pyridoxal 5'-phosphate + H2O2 + NH4(+). It carries out the reaction pyridoxine 5'-phosphate + O2 = pyridoxal 5'-phosphate + H2O2. It functions in the pathway cofactor metabolism; pyridoxal 5'-phosphate salvage; pyridoxal 5'-phosphate from pyridoxamine 5'-phosphate: step 1/1. Its pathway is cofactor metabolism; pyridoxal 5'-phosphate salvage; pyridoxal 5'-phosphate from pyridoxine 5'-phosphate: step 1/1. Functionally, catalyzes the oxidation of either pyridoxine 5'-phosphate (PNP) or pyridoxamine 5'-phosphate (PMP) into pyridoxal 5'-phosphate (PLP). This chain is Pyridoxine/pyridoxamine 5'-phosphate oxidase, found in Bordetella bronchiseptica (strain ATCC BAA-588 / NCTC 13252 / RB50) (Alcaligenes bronchisepticus).